The primary structure comprises 513 residues: Calcium-binding mitochondrial carrier protein SCaMC-2 (513 aa).

At M1 to H233 the chain is on the mitochondrial intermembrane side. 4 consecutive EF-hand domains span residues E55 to H90, R91 to E124, D122 to N157, and I158 to E193. Ca(2+) is bound by residues D68, N70, D72, D79, D104, D106, D108, Q110, and E115. Solcar repeat units lie at residues G228–I314, L322–A407, and P419–T507. A helical transmembrane segment spans residues L234 to L251. Residues D252–R288 are Mitochondrial matrix-facing. A helical transmembrane segment spans residues G289–Y308. The Mitochondrial intermembrane portion of the chain corresponds to E309–G331. Residues S332–M345 form a helical membrane-spanning segment. The Mitochondrial matrix portion of the chain corresponds to E346–K381. A helical transmembrane segment spans residues G382–Y401. Residues E402 to L424 lie on the Mitochondrial intermembrane side of the membrane. A helical membrane pass occupies residues L425–L442. Topologically, residues A443–R481 are mitochondrial matrix. The helical transmembrane segment at G482 to Y501 threads the bilayer. At E502 to R513 the chain is on the mitochondrial intermembrane side.

This sequence belongs to the mitochondrial carrier (TC 2.A.29) family.

The protein resides in the mitochondrion inner membrane. Its function is as follows. Calcium-dependent mitochondrial solute carrier. The chain is Calcium-binding mitochondrial carrier protein SCaMC-2 (slc25a25) from Xenopus tropicalis (Western clawed frog).